Here is a 335-residue protein sequence, read N- to C-terminus: Cobalt-precorrin-5B C(1)-methyltransferase (335 aa).

This sequence belongs to the CbiD family.

The catalysed reaction is Co-precorrin-5B + S-adenosyl-L-methionine = Co-precorrin-6A + S-adenosyl-L-homocysteine. Its pathway is cofactor biosynthesis; adenosylcobalamin biosynthesis; cob(II)yrinate a,c-diamide from sirohydrochlorin (anaerobic route): step 6/10. Catalyzes the methylation of C-1 in cobalt-precorrin-5B to form cobalt-precorrin-6A. The polypeptide is Cobalt-precorrin-5B C(1)-methyltransferase (Methanospirillum hungatei JF-1 (strain ATCC 27890 / DSM 864 / NBRC 100397 / JF-1)).